The sequence spans 127 residues: Large ribosomal subunit protein bL12 (127 aa).

A disordered region spans residues 93–127; the sequence is LVDEAPNPVSEGVSREEADDLKAQIEDAGGEVELQ. The span at 105–117 shows a compositional bias: basic and acidic residues; that stretch reads VSREEADDLKAQI.

This sequence belongs to the bacterial ribosomal protein bL12 family. As to quaternary structure, homodimer. Part of the ribosomal stalk of the 50S ribosomal subunit. Forms a multimeric L10(L12)X complex, where L10 forms an elongated spine to which 2 to 4 L12 dimers bind in a sequential fashion. Binds GTP-bound translation factors.

Forms part of the ribosomal stalk which helps the ribosome interact with GTP-bound translation factors. Is thus essential for accurate translation. The protein is Large ribosomal subunit protein bL12 of Salinibacter ruber (strain DSM 13855 / M31).